A 446-amino-acid polypeptide reads, in one-letter code: Exodeoxyribonuclease 7 large subunit (446 aa).

Belongs to the XseA family. In terms of assembly, heterooligomer composed of large and small subunits.

The protein localises to the cytoplasm. The enzyme catalyses Exonucleolytic cleavage in either 5'- to 3'- or 3'- to 5'-direction to yield nucleoside 5'-phosphates.. Its function is as follows. Bidirectionally degrades single-stranded DNA into large acid-insoluble oligonucleotides, which are then degraded further into small acid-soluble oligonucleotides. The polypeptide is Exodeoxyribonuclease 7 large subunit (Xanthomonas campestris pv. campestris (strain B100)).